We begin with the raw amino-acid sequence, 382 residues long: Dual-specificity RNA methyltransferase RlmN (382 aa).

The Proton acceptor role is filled by Glu-94. The region spanning Glu-100–Asp-336 is the Radical SAM core domain. Cys-107 and Cys-342 form a disulfide bridge. [4Fe-4S] cluster is bound by residues Cys-114, Cys-118, and Cys-121. S-adenosyl-L-methionine-binding positions include Gly-168 to Glu-169, Ser-200, Ser-222 to His-224, and Asn-299. Cys-342 acts as the S-methylcysteine intermediate in catalysis.

The protein belongs to the radical SAM superfamily. RlmN family. [4Fe-4S] cluster serves as cofactor.

It localises to the cytoplasm. It carries out the reaction adenosine(2503) in 23S rRNA + 2 reduced [2Fe-2S]-[ferredoxin] + 2 S-adenosyl-L-methionine = 2-methyladenosine(2503) in 23S rRNA + 5'-deoxyadenosine + L-methionine + 2 oxidized [2Fe-2S]-[ferredoxin] + S-adenosyl-L-homocysteine. It catalyses the reaction adenosine(37) in tRNA + 2 reduced [2Fe-2S]-[ferredoxin] + 2 S-adenosyl-L-methionine = 2-methyladenosine(37) in tRNA + 5'-deoxyadenosine + L-methionine + 2 oxidized [2Fe-2S]-[ferredoxin] + S-adenosyl-L-homocysteine. Functionally, specifically methylates position 2 of adenine 2503 in 23S rRNA and position 2 of adenine 37 in tRNAs. m2A2503 modification seems to play a crucial role in the proofreading step occurring at the peptidyl transferase center and thus would serve to optimize ribosomal fidelity. This Legionella pneumophila (strain Lens) protein is Dual-specificity RNA methyltransferase RlmN.